Reading from the N-terminus, the 340-residue chain is GTP 3',8-cyclase (340 aa).

The region spanning 20 to 246 (RFQRQYTYLR…PKAVNDGPAK (227 aa)) is the Radical SAM core domain. Arginine 29 lines the GTP pocket. Positions 36 and 40 each coordinate [4Fe-4S] cluster. Tyrosine 42 lines the S-adenosyl-L-methionine pocket. Cysteine 43 serves as a coordination point for [4Fe-4S] cluster. Position 79 (arginine 79) interacts with GTP. Glycine 83 is an S-adenosyl-L-methionine binding site. Threonine 110 is a binding site for GTP. Serine 134 provides a ligand contact to S-adenosyl-L-methionine. Lysine 171 provides a ligand contact to GTP. S-adenosyl-L-methionine is bound at residue methionine 205. The [4Fe-4S] cluster site is built by cysteine 268 and cysteine 271. 273 to 275 (RLR) is a binding site for GTP. A [4Fe-4S] cluster-binding site is contributed by cysteine 285.

The protein belongs to the radical SAM superfamily. MoaA family. Monomer and homodimer. The cofactor is [4Fe-4S] cluster.

It carries out the reaction GTP + AH2 + S-adenosyl-L-methionine = (8S)-3',8-cyclo-7,8-dihydroguanosine 5'-triphosphate + 5'-deoxyadenosine + L-methionine + A + H(+). It participates in cofactor biosynthesis; molybdopterin biosynthesis. Functionally, catalyzes the cyclization of GTP to (8S)-3',8-cyclo-7,8-dihydroguanosine 5'-triphosphate. In Haemophilus ducreyi (strain 35000HP / ATCC 700724), this protein is GTP 3',8-cyclase.